The chain runs to 308 residues: N-acetyl-gamma-glutamyl-phosphate reductase (308 aa).

Cys116 is a catalytic residue.

This sequence belongs to the NAGSA dehydrogenase family. Type 2 subfamily.

Its subcellular location is the cytoplasm. The catalysed reaction is N-acetyl-L-glutamate 5-semialdehyde + phosphate + NADP(+) = N-acetyl-L-glutamyl 5-phosphate + NADPH + H(+). The protein operates within amino-acid biosynthesis; L-arginine biosynthesis; N(2)-acetyl-L-ornithine from L-glutamate: step 3/4. Catalyzes the NADPH-dependent reduction of N-acetyl-5-glutamyl phosphate to yield N-acetyl-L-glutamate 5-semialdehyde. This chain is N-acetyl-gamma-glutamyl-phosphate reductase, found in Mesorhizobium japonicum (strain LMG 29417 / CECT 9101 / MAFF 303099) (Mesorhizobium loti (strain MAFF 303099)).